A 600-amino-acid polypeptide reads, in one-letter code: Proline--tRNA ligase (600 aa).

Belongs to the class-II aminoacyl-tRNA synthetase family. ProS type 1 subfamily. As to quaternary structure, homodimer.

The protein localises to the cytoplasm. It catalyses the reaction tRNA(Pro) + L-proline + ATP = L-prolyl-tRNA(Pro) + AMP + diphosphate. Its function is as follows. Catalyzes the attachment of proline to tRNA(Pro) in a two-step reaction: proline is first activated by ATP to form Pro-AMP and then transferred to the acceptor end of tRNA(Pro). As ProRS can inadvertently accommodate and process non-cognate amino acids such as alanine and cysteine, to avoid such errors it has two additional distinct editing activities against alanine. One activity is designated as 'pretransfer' editing and involves the tRNA(Pro)-independent hydrolysis of activated Ala-AMP. The other activity is designated 'posttransfer' editing and involves deacylation of mischarged Ala-tRNA(Pro). The misacylated Cys-tRNA(Pro) is not edited by ProRS. This Prochlorococcus marinus (strain MIT 9301) protein is Proline--tRNA ligase.